Reading from the N-terminus, the 139-residue chain is Large-conductance mechanosensitive channel (139 aa).

2 helical membrane passes run 9-29 (AFAV…GAAF) and 79-99 (IQTV…VKAI).

It belongs to the MscL family. As to quaternary structure, homopentamer.

Its subcellular location is the cell inner membrane. Channel that opens in response to stretch forces in the membrane lipid bilayer. May participate in the regulation of osmotic pressure changes within the cell. The protein is Large-conductance mechanosensitive channel of Pseudomonas putida (strain ATCC 700007 / DSM 6899 / JCM 31910 / BCRC 17059 / LMG 24140 / F1).